Here is a 65-residue protein sequence, read N- to C-terminus: Large ribosomal subunit protein bL31 (65 aa).

4 residues coordinate Zn(2+): C16, C18, C36, and C39.

This sequence belongs to the bacterial ribosomal protein bL31 family. Type A subfamily. In terms of assembly, part of the 50S ribosomal subunit. The cofactor is Zn(2+).

In terms of biological role, binds the 23S rRNA. The polypeptide is Large ribosomal subunit protein bL31 (Campylobacter jejuni subsp. doylei (strain ATCC BAA-1458 / RM4099 / 269.97)).